Reading from the N-terminus, the 143-residue chain is Large ribosomal subunit protein uL13 (143 aa).

The protein belongs to the universal ribosomal protein uL13 family. In terms of assembly, part of the 50S ribosomal subunit.

This protein is one of the early assembly proteins of the 50S ribosomal subunit, although it is not seen to bind rRNA by itself. It is important during the early stages of 50S assembly. The polypeptide is Large ribosomal subunit protein uL13 (Alkaliphilus oremlandii (strain OhILAs) (Clostridium oremlandii (strain OhILAs))).